An 81-amino-acid polypeptide reads, in one-letter code: Cytotoxin 2 (81 aa).

The signal sequence occupies residues 1-21; the sequence is MKTLLLTLVVVTIVCLDLGYT. 4 cysteine pairs are disulfide-bonded: C24/C42, C35/C59, C63/C74, and C75/C80.

The protein belongs to the three-finger toxin family. Short-chain subfamily. Type IA cytotoxin sub-subfamily. As to quaternary structure, monomer in solution; Homodimer and oligomer in the presence of negatively charged lipids forming a pore with a size ranging between 20 and 30 Angstroms. Expressed by the venom gland.

It localises to the secreted. Its subcellular location is the target cell membrane. Shows cytolytic activity on many different cells by forming pore in lipid membranes. In vivo, increases heart rate or kills the animal by cardiac arrest. In addition, it binds to heparin with high affinity, interacts with Kv channel-interacting protein 1 (KCNIP1) in a calcium-independent manner, and binds to integrin alpha-V/beta-3 (ITGAV/ITGB3) with moderate affinity. The chain is Cytotoxin 2 from Naja kaouthia (Monocled cobra).